A 364-amino-acid chain; its full sequence is S-adenosylmethionine:tRNA ribosyltransferase-isomerase (364 aa).

It belongs to the QueA family. Monomer.

The protein resides in the cytoplasm. The catalysed reaction is 7-aminomethyl-7-carbaguanosine(34) in tRNA + S-adenosyl-L-methionine = epoxyqueuosine(34) in tRNA + adenine + L-methionine + 2 H(+). Its pathway is tRNA modification; tRNA-queuosine biosynthesis. In terms of biological role, transfers and isomerizes the ribose moiety from AdoMet to the 7-aminomethyl group of 7-deazaguanine (preQ1-tRNA) to give epoxyqueuosine (oQ-tRNA). This chain is S-adenosylmethionine:tRNA ribosyltransferase-isomerase, found in Lachnoclostridium phytofermentans (strain ATCC 700394 / DSM 18823 / ISDg) (Clostridium phytofermentans).